Here is a 200-residue protein sequence, read N- to C-terminus: NAD(P)H dehydrogenase (quinone) (200 aa).

The 188-residue stretch at 4–191 (VLVLYYSSYG…DIARYQGKHV (188 aa)) folds into the Flavodoxin-like domain. FMN is bound by residues 10-15 (SSYGHV) and 79-81 (TRF). Residue tyrosine 12 participates in NAD(+) binding. Tryptophan 99 contacts substrate. FMN contacts are provided by residues 114-120 (STGTQHG) and histidine 135.

It belongs to the WrbA family. Requires FMN as cofactor.

The enzyme catalyses a quinone + NADH + H(+) = a quinol + NAD(+). The catalysed reaction is a quinone + NADPH + H(+) = a quinol + NADP(+). In Burkholderia orbicola (strain MC0-3), this protein is NAD(P)H dehydrogenase (quinone).